A 173-amino-acid polypeptide reads, in one-letter code: Photosystem I assembly protein Ycf3 (173 aa).

3 TPR repeats span residues 35-68, 72-105, and 120-153; these read AYVY…EESP, SETL…NSNQ, and GRTA…YPGG.

It belongs to the Ycf3 family.

The protein localises to the cellular thylakoid membrane. Functionally, essential for the assembly of the photosystem I (PSI) complex. May act as a chaperone-like factor to guide the assembly of the PSI subunits. The polypeptide is Photosystem I assembly protein Ycf3 (Prochlorococcus marinus (strain MIT 9303)).